The following is a 211-amino-acid chain: 3,4-dihydroxy-2-butanone 4-phosphate synthase (211 aa).

D-ribulose 5-phosphate is bound by residues 37 to 38, Asp-42, 150 to 154, and Glu-174; these read RE and RGGHT. Position 38 (Glu-38) interacts with Mg(2+). His-153 contributes to the Mg(2+) binding site.

The protein belongs to the DHBP synthase family. Homodimer. Mg(2+) serves as cofactor. Mn(2+) is required as a cofactor.

It catalyses the reaction D-ribulose 5-phosphate = (2S)-2-hydroxy-3-oxobutyl phosphate + formate + H(+). It participates in cofactor biosynthesis; riboflavin biosynthesis; 2-hydroxy-3-oxobutyl phosphate from D-ribulose 5-phosphate: step 1/1. Functionally, catalyzes the conversion of D-ribulose 5-phosphate to formate and 3,4-dihydroxy-2-butanone 4-phosphate. This Baumannia cicadellinicola subsp. Homalodisca coagulata protein is 3,4-dihydroxy-2-butanone 4-phosphate synthase.